Here is a 727-residue protein sequence, read N- to C-terminus: Probable metal-nicotianamine transporter YSL14 (727 aa).

2 stretches are compositionally biased toward low complexity: residues 1–10 (MAQHTAAAAG) and 18–27 (AEAAAAAAAG). A disordered region spans residues 1–61 (MAQHTAAAAG…RNGGADDPDA (61 aa)). A compositionally biased stretch (gly residues) spans 45 to 54 (AGGGGGGRNG). Transmembrane regions (helical) follow at residues 84 to 104 (AFVVSALLAVMFSVIVMKLNL), 107 to 127 (GIIPSLNVSAGLLGFFFVRLW), 152 to 172 (CVVSAYGIAFSGGFGSYLFGM), 194 to 214 (LGWMIGFLFLVSFIGLFALVP), 256 to 276 (LGKYFLFSFFWGFFQWFYTAG), 314 to 334 (IVNVSVLLGGILSWGVMWPLI), 359 to 379 (VFISIALILGDGLYNFLKVLI), 432 to 452 (VAYGGYVVVAALSIGTLPEIF), 460 to 480 (ILVAYIVAPVLAFCNAYGSGL), 492 to 512 (LAIFVFGAWAGLSHGGVLVGL), 546 to 566 (FISQVIGTGMGCVIAPCVFWL), 604 to 624 (PENCLTLCYIFFAAAIAINLI), 646 to 666 (FYIGSYFAIDMFLGSVILFVW), and 681 to 701 (VASGLICGDGIWTLPQSILAL).

This sequence belongs to the YSL (TC 2.A.67.2) family. As to expression, expressed in leaves and at low levels in roots.

It localises to the membrane. May be involved in the transport of nicotianamine-chelated metals. The protein is Probable metal-nicotianamine transporter YSL14 (YSL14) of Oryza sativa subsp. japonica (Rice).